The chain runs to 403 residues: S-adenosylmethionine synthase (403 aa).

Histidine 17 is a binding site for ATP. Aspartate 19 contacts Mg(2+). K(+) is bound at residue glutamate 45. Residues glutamate 58 and glutamine 101 each contribute to the L-methionine site. A flexible loop region spans residues 101-111 (QSPDIAMGVDR). Residues 177–179 (DGK), 244–245 (RF), aspartate 253, 259–260 (RK), alanine 276, and lysine 280 contribute to the ATP site. Residue aspartate 253 coordinates L-methionine. Position 284 (lysine 284) interacts with L-methionine.

Belongs to the AdoMet synthase family. In terms of assembly, homotetramer; dimer of dimers. The cofactor is Mg(2+). It depends on K(+) as a cofactor.

It localises to the cytoplasm. The enzyme catalyses L-methionine + ATP + H2O = S-adenosyl-L-methionine + phosphate + diphosphate. It participates in amino-acid biosynthesis; S-adenosyl-L-methionine biosynthesis; S-adenosyl-L-methionine from L-methionine: step 1/1. Catalyzes the formation of S-adenosylmethionine (AdoMet) from methionine and ATP. The overall synthetic reaction is composed of two sequential steps, AdoMet formation and the subsequent tripolyphosphate hydrolysis which occurs prior to release of AdoMet from the enzyme. This Geobacillus kaustophilus (strain HTA426) protein is S-adenosylmethionine synthase.